An 878-amino-acid polypeptide reads, in one-letter code: Probable outer membrane protein PmpI (878 aa).

The signal sequence occupies residues 1–24 (MRPDHMNFCCLCAAILSSTAVLFG). Residues 360–371 (SSKESPLPSSLQ) are compositionally biased toward low complexity. The disordered stretch occupies residues 360–381 (SSKESPLPSSLQASVTSPTPAT). Polar residues predominate over residues 372 to 381 (ASVTSPTPAT). The 277-residue stretch at 602–878 (GGAYLFGTWG…SLDLGTTYRF (277 aa)) folds into the Autotransporter domain.

This sequence belongs to the PMP outer membrane protein family.

The protein resides in the secreted. Its subcellular location is the cell wall. It is found in the cell outer membrane. The sequence is that of Probable outer membrane protein PmpI (pmpI) from Chlamydia trachomatis serovar D (strain ATCC VR-885 / DSM 19411 / UW-3/Cx).